A 310-amino-acid polypeptide reads, in one-letter code: tRNA-cytidine(32) 2-sulfurtransferase (310 aa).

Residues 45–50 (SGGKDS) carry the PP-loop motif motif. C120, C123, and C211 together coordinate [4Fe-4S] cluster.

Belongs to the TtcA family. Homodimer. It depends on Mg(2+) as a cofactor. [4Fe-4S] cluster is required as a cofactor.

The protein resides in the cytoplasm. The catalysed reaction is cytidine(32) in tRNA + S-sulfanyl-L-cysteinyl-[cysteine desulfurase] + AH2 + ATP = 2-thiocytidine(32) in tRNA + L-cysteinyl-[cysteine desulfurase] + A + AMP + diphosphate + H(+). Its pathway is tRNA modification. Catalyzes the ATP-dependent 2-thiolation of cytidine in position 32 of tRNA, to form 2-thiocytidine (s(2)C32). The sulfur atoms are provided by the cysteine/cysteine desulfurase (IscS) system. The sequence is that of tRNA-cytidine(32) 2-sulfurtransferase from Shewanella sp. (strain ANA-3).